Here is a 268-residue protein sequence, read N- to C-terminus: Very-long-chain aldehyde decarbonylase GL1-8 (268 aa).

The next 4 helical transmembrane spans lie at 26-46, 70-90, 107-127, and 164-184; these read IGTF…SLLF, CVVR…ILSY, WTVV…IFYW, and ILFL…HLFT. The Fatty acid hydroxylase domain occupies 114-249; it reads VLFFFVLEDF…FIYMDWLFGT (136 aa).

It belongs to the sterol desaturase family. Homodimer.

The protein localises to the endoplasmic reticulum membrane. The catalysed reaction is a long-chain fatty aldehyde + 2 NADPH + O2 + H(+) = a long-chain alkane + formate + 2 NADP(+) + H2O. Its function is as follows. Aldehyde decarbonylase involved in the conversion of aldehydes to alkanes. Core component of a very-long-chain alkane synthesis complex. This Oryza sativa subsp. indica (Rice) protein is Very-long-chain aldehyde decarbonylase GL1-8.